A 141-amino-acid chain; its full sequence is Large ribosomal subunit protein uL11 (141 aa).

Belongs to the universal ribosomal protein uL11 family. In terms of assembly, part of the ribosomal stalk of the 50S ribosomal subunit. Interacts with L10 and the large rRNA to form the base of the stalk. L10 forms an elongated spine to which L12 dimers bind in a sequential fashion forming a multimeric L10(L12)X complex. In terms of processing, one or more lysine residues are methylated.

In terms of biological role, forms part of the ribosomal stalk which helps the ribosome interact with GTP-bound translation factors. This Chlamydia abortus (strain DSM 27085 / S26/3) (Chlamydophila abortus) protein is Large ribosomal subunit protein uL11.